A 500-amino-acid polypeptide reads, in one-letter code: NAD(P)H-quinone oxidoreductase chain 4, chloroplastic (500 aa).

Transmembrane regions (helical) follow at residues 4–24 (FPWL…IFFL), 35–55 (YTMG…CYHF), 87–107 (IGPI…AWPV), 113–130 (LFHF…GLFS), 134–154 (LLLF…LLSM), 167–187 (FILY…GMGL), 208–228 (GLEI…LPII), 242–262 (HYST…YGLI), 274–294 (SIFS…AALT), 305–325 (IAYS…SLTN), 330–350 (GAIL…FLGG), 386–406 (LALP…GIIT), 416–436 (IIIT…LLSM), and 463–483 (FVSI…DLVI).

The protein belongs to the complex I subunit 4 family.

The protein localises to the plastid. The protein resides in the chloroplast thylakoid membrane. The catalysed reaction is a plastoquinone + NADH + (n+1) H(+)(in) = a plastoquinol + NAD(+) + n H(+)(out). It catalyses the reaction a plastoquinone + NADPH + (n+1) H(+)(in) = a plastoquinol + NADP(+) + n H(+)(out). The chain is NAD(P)H-quinone oxidoreductase chain 4, chloroplastic from Lemna minor (Common duckweed).